Here is a 250-residue protein sequence, read N- to C-terminus: UPF0193 protein EVG1 homolog (250 aa).

Residues 86-110 are disordered; it reads ESLRNGEPLPLPEPPRPNTNNDPDK.

It belongs to the UPF0193 (EVG1) family.

The protein is UPF0193 protein EVG1 homolog of Drosophila melanogaster (Fruit fly).